A 67-amino-acid chain; its full sequence is DNA-directed RNA polymerase subunit omega (67 aa).

It belongs to the RNA polymerase subunit omega family. The RNAP catalytic core consists of 2 alpha, 1 beta, 1 beta' and 1 omega subunit. When a sigma factor is associated with the core the holoenzyme is formed, which can initiate transcription.

It catalyses the reaction RNA(n) + a ribonucleoside 5'-triphosphate = RNA(n+1) + diphosphate. In terms of biological role, promotes RNA polymerase assembly. Latches the N- and C-terminal regions of the beta' subunit thereby facilitating its interaction with the beta and alpha subunits. This is DNA-directed RNA polymerase subunit omega from Listeria monocytogenes serotype 4b (strain F2365).